The sequence spans 65 residues: Large ribosomal subunit protein bL35 (65 aa).

Positions M1–R30 are disordered. The span at A10 to R30 shows a compositional bias: basic residues.

Belongs to the bacterial ribosomal protein bL35 family.

The sequence is that of Large ribosomal subunit protein bL35 from Pseudoalteromonas atlantica (strain T6c / ATCC BAA-1087).